We begin with the raw amino-acid sequence, 709 residues long: Transcriptional factor SWI5 (709 aa).

At S225 the chain carries Phosphoserine. The segment covering 245–264 has biased composition (polar residues); it reads LSPMISPPMSNTSFTGSPSR. The disordered stretch occupies residues 245 to 267; it reads LSPMISPPMSNTSFTGSPSRRNN. 2 positions are modified to phosphoserine: S278 and S300. A Phosphothreonine modification is found at T339. Position 376 is a phosphoserine (S376). A disordered region spans residues 443–483; the sequence is LKPPSQQARHREGVFNDLDPNVLTKNTDNEGDDNEENEPES. Acidic residues predominate over residues 471 to 480; it reads NEGDDNEENE. S488, S492, and S505 each carry phosphoserine. S522 is subject to Phosphoserine; by CDC28. 3 consecutive C2H2-type zinc fingers follow at residues 550–574, 580–604, and 609–632; these read FECL…IQTH, YSCD…KKSH, and YACP…RMIC. The Nuclear localization signal signature appears at 635-659; that stretch reads GKKYENVVIKRSPRKRGRPRKDGTS. The disordered stretch occupies residues 644 to 677; the sequence is KRSPRKRGRPRKDGTSSVSSSPIKENINKDHNGQ. S646 carries the phosphoserine; by CDC28 modification. A DNA-binding region (a.T hook) is located at residues 647-659; the sequence is PRKRGRPRKDGTS. S664 carries the post-translational modification Phosphoserine; by CDC28.

In terms of processing, cell cycle-dependent phosphorylation of three serine residues prevents SWI5 from entering the nucleus, and it accumulates in the cytoplasm. As a consequence of CDC28 kinase inactivation at the end of anaphase, the three serine residues are dephosphorylated and SWI5 enters the nucleus to activate transcription. It is then rapidly degraded. Threonine phosphorylation also seems to occur. Phosphorylated by PHO85.

The protein resides in the nucleus. It is found in the cytoplasm. Determines the mother-cell-specific transcription of the HO endonuclease gene that is responsible for the initiation of mating-type switching in yeast. Recognizes a specific sequence in the promoter of the HO gene. Activates EGT2 transcription in a concentration-dependent manner. Synthesized during G2 and early mitosis. In Saccharomyces cerevisiae (strain ATCC 204508 / S288c) (Baker's yeast), this protein is Transcriptional factor SWI5 (SWI5).